We begin with the raw amino-acid sequence, 282 residues long: Homeobox protein pv.1 (282 aa).

Composition is skewed to basic and acidic residues over residues 17-26 and 44-59; these read EEAADGKDSM and YAKEMPRRKDGQDVQE. A disordered region spans residues 17–128; sequence EEAADGKDSM…HRGESPKSDL (112 aa). Polar residues-rich tracts occupy residues 86–96 and 103–114; these read WGSSDDFSSVG and EGSPSPMRNSQE. Basic and acidic residues predominate over residues 116-128; the sequence is ETDHRGESPKSDL. Positions 129–188 form a DNA-binding region, homeobox; sequence QRHLRTAFTPQQISKLEQAFNKQRYLGASERKKLATSLRLSEIQVKTWFQNRRMKLKRQI.

As to expression, expressed in the ventral marginal zone of blastulae. At early gastrulation, expression begins to spread to the animal pole (ectoderm), and at stage 11.5 is expressed in a gradient across the animal cap, with levels highest in the ventral region. At the end of gastrulation, predominantly localized to the ventral and lateral regions of the closing slit blastopore. Also expressed at a low level in ventral endoderm.

Its subcellular location is the nucleus. Its function is as follows. Transcriptional repressor. Acts in a ventral signaling pathway downstream of bmp4, which suppresses dorsal mesoderm formation and leads to both ventral mesoderm and ventral ectoderm formation. Acts in the ectoderm to simultaneously specify epidermal lineages and restrict neuralization. Represses transcription of dorsal-specific genes. Binds to DNA, with preference for the target sequences 5'-TAATGC-3' and 5'-TAATTG-3'. Acts in a pathway downstream of bmp4 and fgf to negatively regulate erythroid specification. This chain is Homeobox protein pv.1, found in Xenopus laevis (African clawed frog).